The sequence spans 219 residues: Probable GTP-binding protein EngB (219 aa).

Positions 26 to 200 constitute an EngB-type G domain; the sequence is EGVEIAFAGR…RAKLDTWFAP (175 aa). GTP contacts are provided by residues 34–41, 61–65, 79–82, 146–149, and 179–181; these read GRSNAGKS, GRTQL, DLPG, TKAD, and FSS. The Mg(2+) site is built by Ser41 and Thr63.

Belongs to the TRAFAC class TrmE-Era-EngA-EngB-Septin-like GTPase superfamily. EngB GTPase family. The cofactor is Mg(2+).

Its function is as follows. Necessary for normal cell division and for the maintenance of normal septation. This Vibrio parahaemolyticus serotype O3:K6 (strain RIMD 2210633) protein is Probable GTP-binding protein EngB.